The chain runs to 662 residues: Pro-neuregulin-1, membrane-bound isoform (662 aa).

Positions 1–13 (MSERKEGRGKGKG) are excised as a propeptide. Residues 1-52 (MSERKEGRGKGKGKKKDRGSRGKPGPAEGDPSPALPPRLKEMKSQESAAGSK) form a disordered region. The Extracellular segment spans residues 14–265 (KKKDRGSRGK…SKAEELYQKR (252 aa)). The Ig-like C2-type domain occupies 37-128 (PRLKEMKSQE…GNDSASANIT (92 aa)). A disulfide bond links C57 and C112. N-linked (GlcNAc...) asparagine glycans are attached at residues N120, N126, and N164. The EGF-like domain occupies 178–222 (HLIKCAEKEKTFCVNGGECFTVKDLSNPSRYLCKCPNEFTGDRCQ). 3 cysteine pairs are disulfide-bonded: C182–C196, C190–C210, and C212–C221. Residues 266–288 (VLTITGICIALLVVGIMCVVAYC) traverse the membrane as a helical segment. The Cytoplasmic portion of the chain corresponds to 289–662 (KTKKQRQKLH…VIANQDPIAV (374 aa)). The span at 358–373 (SHYTSTAHHSTTVTQT) shows a compositional bias: low complexity. 3 disordered regions span residues 358–383 (SHYT…NGHT), 398–480 (SVEN…PVSS), and 547–610 (YETT…DTPF). Positions 374–383 (PSHSWSNGHT) are enriched in polar residues. A compositionally biased stretch (gly residues) spans 410 to 420 (GPRGRLHGLGG). Positions 425-445 (SFLRHARETPDSYRDSPHSER) are enriched in basic and acidic residues. Residues 564–574 (TNSRRAKRTKP) are compositionally biased toward basic residues. Over residues 585 to 596 (DSNTSSVSSNSE) the composition is skewed to low complexity.

Belongs to the neuregulin family. The cytoplasmic domain interacts with the LIM domain region of LIMK1. Forms a ternary complex with ERBB3 and ITGAV:ITGB3 or ITGA6:ITGB4. Interacts with NRDC and BACE1. Post-translationally, proteolytic cleavage close to the plasma membrane on the external face leads to the release of the soluble growth factor form. In terms of processing, N- and O-glycosylated. Extensive glycosylation precedes the proteolytic cleavage. Widely expressed. Most tissues contain isoform alpha2A and isoform alpha2B. Isoform Alpha2 and isoform beta2 are the predominant forms in mesenchymal and non-neuronal organs. Isoform Beta1 is enriched in brain and spinal cord, but not in muscle and heart. Isoform Alpha2C is highly expressed in spinal cord, moderately in lung, brain, ovary, and stomach, in low amounts in the kidney, skin and heart and not detected in the liver, spleen, and placenta.

Its subcellular location is the cell membrane. It localises to the secreted. Its function is as follows. Direct ligand for ERBB3 and ERBB4 tyrosine kinase receptors. Concomitantly recruits ERBB1 and ERBB2 coreceptors, resulting in ligand-stimulated tyrosine phosphorylation and activation of the ERBB receptors. The multiple isoforms perform diverse functions such as inducing growth and differentiation of epithelial, glial, neuronal, and skeletal muscle cells; inducing expression of acetylcholine receptor in synaptic vesicles during the formation of the neuromuscular junction; stimulating lobuloalveolar budding and milk production in the mammary gland and inducing differentiation of mammary tumor cells; stimulating Schwann cell proliferation; implication in the development of the myocardium such as trabeculation of the developing heart. Binds to ERBB4 and ERBB3. Acts as a ligand for integrins and binds (via EGF domain) to integrins ITGAV:ITGB3 or ITGA6:ITGB4. Its binding to integrins and subsequent ternary complex formation with integrins and ERRB3 are essential for NRG1-ERBB signaling. Induces the phosphorylation and activation of MAPK3/ERK1, MAPK1/ERK2 and AKT1, and ligand-dependent ERBB4 endocytosis is essential for the NRG1-mediated activation of these kinases in neurons. The chain is Pro-neuregulin-1, membrane-bound isoform (Nrg1) from Rattus norvegicus (Rat).